Consider the following 326-residue polypeptide: Olfactory receptor 11H12 (326 aa).

At 1–44 (MCPLTLQVTGLMNVSEPNSSFAFVNEFILQGFTCEWTIQIFLFS) the chain is on the extracellular side. Asn-13 and Asn-18 each carry an N-linked (GlcNAc...) asparagine glycan. Residues 45–65 (LFTTTYALTITGNGAIAFVLW) traverse the membrane as a helical segment. Residues 66 to 72 (CDWRLHT) lie on the Cytoplasmic side of the membrane. The helical transmembrane segment at 73-93 (PMYMFLGNFSFLEIWYVSSTV) threads the bilayer. Residues 94–112 (PKMLVNFLSEKKNISFAGC) lie on the Extracellular side of the membrane. N-linked (GlcNAc...) asparagine glycosylation is present at Asn-106. The cysteines at positions 112 and 194 are disulfide-linked. Residues 113-133 (FLQFYFFFSLGTSECLLLTVM) form a helical membrane-spanning segment. The Cytoplasmic portion of the chain corresponds to 134-158 (AFDQYLAICRPLLYPNIMTGHLCAK). Residues 159–179 (LVILCWVCGFLWFLIPIVLIS) form a helical membrane-spanning segment. The Extracellular portion of the chain corresponds to 180-216 (QMPFCGPNIIDHVVCDPGPRFALDCVSAPRIQLFCYT). The chain crosses the membrane as a helical span at residues 217–237 (LSSLVIFGNFLFIIGSYTLVL). The Cytoplasmic segment spans residues 238–259 (KAVLGMPSSTGRHKAFSTCGSH). A helical membrane pass occupies residues 260–280 (LAVVSLCYSSLMVMYVSPGLG). Topologically, residues 281–287 (HSTGMQK) are extracellular. Residues 288–308 (IETLFYAMVTPLFNPLIYSLQ) traverse the membrane as a helical segment. Topologically, residues 309 to 326 (NKEIKAALRKVLGSSNII) are cytoplasmic.

Belongs to the G-protein coupled receptor 1 family.

Its subcellular location is the cell membrane. Odorant receptor. This Homo sapiens (Human) protein is Olfactory receptor 11H12 (OR11H12).